Here is a 252-residue protein sequence, read N- to C-terminus: 3-dehydroquinate dehydratase (252 aa).

Residues 47–49 and R83 each bind 3-dehydroquinate; that span reads EWR. Residue H144 is the Proton donor/acceptor of the active site. K171 (schiff-base intermediate with substrate) is an active-site residue. The 3-dehydroquinate site is built by R213, S232, and Q236.

This sequence belongs to the type-I 3-dehydroquinase family. In terms of assembly, homodimer.

The enzyme catalyses 3-dehydroquinate = 3-dehydroshikimate + H2O. The protein operates within metabolic intermediate biosynthesis; chorismate biosynthesis; chorismate from D-erythrose 4-phosphate and phosphoenolpyruvate: step 3/7. In terms of biological role, involved in the third step of the chorismate pathway, which leads to the biosynthesis of aromatic amino acids. Catalyzes the cis-dehydration of 3-dehydroquinate (DHQ) and introduces the first double bond of the aromatic ring to yield 3-dehydroshikimate. This chain is 3-dehydroquinate dehydratase, found in Lactiplantibacillus plantarum (strain ATCC BAA-793 / NCIMB 8826 / WCFS1) (Lactobacillus plantarum).